A 900-amino-acid polypeptide reads, in one-letter code: Translation initiation factor IF-2 (900 aa).

Disordered stretches follow at residues 30-77 (GEFV…SLDK) and 89-291 (NGKA…YDSM). Low complexity predominate over residues 89 to 112 (NGKATAAPAKAADSGGAAIVSPTT). Residues 113–129 (PAAPEPPTAVPPSPQAP) are compositionally biased toward pro residues. The segment covering 175–187 (PGTARPGVPRPGA) has biased composition (low complexity). Residues 215-271 (GRPGAPGAGRSDAGGGNYRGGGVGAAPGTGFRGRPGGGGGGRPGQRGGAAGAFGRPG) are compositionally biased toward gly residues. The segment covering 275–284 (RRGRKSKRQK) has biased composition (basic residues). The 172-residue stretch at 396–567 (VRPPVVTVMG…AVLLTADAAL (172 aa)) folds into the tr-type G domain. Residues 405 to 412 (GHVDHGKT) are G1. Residue 405–412 (GHVDHGKT) participates in GTP binding. The G2 stretch occupies residues 430–434 (GITQH). The tract at residues 455–458 (DTPG) is G3. Residues 455 to 459 (DTPGH) and 509 to 512 (NKID) each bind GTP. Residues 509–512 (NKID) are G4. A G5 region spans residues 545–547 (SAK).

Belongs to the TRAFAC class translation factor GTPase superfamily. Classic translation factor GTPase family. IF-2 subfamily.

Its subcellular location is the cytoplasm. In terms of biological role, one of the essential components for the initiation of protein synthesis. Protects formylmethionyl-tRNA from spontaneous hydrolysis and promotes its binding to the 30S ribosomal subunits. Also involved in the hydrolysis of GTP during the formation of the 70S ribosomal complex. The polypeptide is Translation initiation factor IF-2 (Mycobacterium bovis (strain BCG / Pasteur 1173P2)).